A 442-amino-acid chain; its full sequence is Cysteine proteinase 4 (442 aa).

A signal peptide spans 1 to 17 (MRVLSFLCLLLVSYASA). Residues 18–111 (KQQFSELQYR…TEEEKIFSTP (94 aa)) constitute a propeptide, activation peptide. 2 disulfides stabilise this stretch: cysteine 132-cysteine 178 and cysteine 169-cysteine 212. The active site involves cysteine 135. 2 N-linked (GlcNAc...) asparagine glycosylation sites follow: asparagine 228 and asparagine 254. Cysteines 270 and 428 form a disulfide. Histidine 277 is an active-site residue. The tract at residues 286 to 396 (SGSSSSSGSS…SGSGSGAVEA (111 aa)) is disordered. Low complexity predominate over residues 287–376 (GSSSSSGSSS…SASGQASASG (90 aa)). Over residues 377-391 (SGSGSGSGSGSGSGS) the composition is skewed to gly residues. Residue asparagine 406 is part of the active site.

The protein belongs to the peptidase C1 family. Glycosylated; contains GlcNAc-alpha-1-P-Ser residues and fucose.

Its subcellular location is the lysosome. The protein is Cysteine proteinase 4 (cprD) of Dictyostelium discoideum (Social amoeba).